A 405-amino-acid chain; its full sequence is L-carnitine CoA-transferase (405 aa).

Positions 97 and 104 each coordinate CoA. Catalysis depends on Asp-169, which acts as the Nucleophile.

The protein belongs to the CoA-transferase III family. CaiB subfamily. As to quaternary structure, homodimer.

The protein localises to the cytoplasm. It carries out the reaction crotonobetainyl-CoA + (R)-carnitine = crotonobetaine + (R)-carnitinyl-CoA. The enzyme catalyses 4-(trimethylamino)butanoyl-CoA + (R)-carnitine = (R)-carnitinyl-CoA + 4-(trimethylamino)butanoate. Its pathway is amine and polyamine metabolism; carnitine metabolism. In terms of biological role, catalyzes the reversible transfer of the CoA moiety from gamma-butyrobetainyl-CoA to L-carnitine to generate L-carnitinyl-CoA and gamma-butyrobetaine. Is also able to catalyze the reversible transfer of the CoA moiety from gamma-butyrobetainyl-CoA or L-carnitinyl-CoA to crotonobetaine to generate crotonobetainyl-CoA. The polypeptide is L-carnitine CoA-transferase (Shigella flexneri serotype 5b (strain 8401)).